The sequence spans 1064 residues: Lethal(2) giant larvae protein homolog 1 (1064 aa).

WD repeat units lie at residues 38–71, 78–119, 139–176, 200–234, 240–272, 290–332, 340–374, 396–474, 518–593, 602–663, 723–783, 792–844, 849–902, and 916–939; these read SALA…FTGL, VTQM…ALSF, VTVV…GQTL, SLQG…DHIF, LESL…GSFP, AINK…ETLV, IIDF…VLDL, TCSA…YKLS, QKVA…RVLV, TAVT…LRQS, VRCL…KEVQ, AIAV…VSAK, LTAH…VHYS, and VFTR…SLSA. At Ser663 the chain carries Phosphoserine. Thr958 is subject to Phosphothreonine. A disordered region spans residues 966 to 1010; that stretch reads ESPKLSQANGTPSILLAPQSLDGSPDPAHSMGPDTPEPPEAALSP. Phosphoserine occurs at positions 967 and 985.

This sequence belongs to the WD repeat L(2)GL family. Associated with nonmuscle myosin II heavy chain. Interacts with PRKCI/aPKC, PARD6B/Par-6 and PARD6A. Interacts with STX4A. Interacts with RAB10 (GDP-bound form); the interaction is direct and promotes RAB10 association with membranes and activation through competition with the Rab inhibitor GDI1. Interacts with DCAF1. Phosphorylated at least at Ser-663 by PRKCI. As to expression, expressed in brain, kidney, and muscle but is barely seen in heart and placenta. Down-regulated or lost in all cell lines and in most of the tumor samples analyzed. Loss was associated with advanced stage of the disease.

It is found in the early endosome membrane. The protein localises to the golgi apparatus. The protein resides in the trans-Golgi network membrane. Its subcellular location is the golgi apparatus membrane. It localises to the cell projection. It is found in the axon. The protein localises to the cytoplasm. The protein resides in the cytoskeleton. In terms of biological role, cortical cytoskeleton protein found in a complex involved in maintaining cell polarity and epithelial integrity. Involved in the regulation of mitotic spindle orientation, proliferation, differentiation and tissue organization of neuroepithelial cells. Involved in axonogenesis through RAB10 activation thereby regulating vesicular membrane trafficking toward the axonal plasma membrane. In Homo sapiens (Human), this protein is Lethal(2) giant larvae protein homolog 1 (LLGL1).